The chain runs to 437 residues: Glutamyl-tRNA reductase (437 aa).

Substrate-binding positions include Thr-46–Arg-49, Ser-111, Glu-116–Glu-118, and Gln-122. Residue Cys-47 is the Nucleophile of the active site. An NADP(+)-binding site is contributed by Gly-192–Ala-197. Residues Pro-413–Gly-437 are disordered. Residues Asp-426 to Gly-437 show a composition bias toward basic and acidic residues.

The protein belongs to the glutamyl-tRNA reductase family. As to quaternary structure, homodimer.

It catalyses the reaction (S)-4-amino-5-oxopentanoate + tRNA(Glu) + NADP(+) = L-glutamyl-tRNA(Glu) + NADPH + H(+). It participates in porphyrin-containing compound metabolism; protoporphyrin-IX biosynthesis; 5-aminolevulinate from L-glutamyl-tRNA(Glu): step 1/2. Its function is as follows. Catalyzes the NADPH-dependent reduction of glutamyl-tRNA(Glu) to glutamate 1-semialdehyde (GSA). The polypeptide is Glutamyl-tRNA reductase (Kocuria rhizophila (strain ATCC 9341 / DSM 348 / NBRC 103217 / DC2201)).